The sequence spans 502 residues: UDP-N-acetylmuramoylalanine--D-glutamate ligase (502 aa).

129 to 135 (GTNGKTT) provides a ligand contact to ATP. The disordered stretch occupies residues 288–307 (APDETTSRRRKRDGAHTPDI).

This sequence belongs to the MurCDEF family.

Its subcellular location is the cytoplasm. It catalyses the reaction UDP-N-acetyl-alpha-D-muramoyl-L-alanine + D-glutamate + ATP = UDP-N-acetyl-alpha-D-muramoyl-L-alanyl-D-glutamate + ADP + phosphate + H(+). It participates in cell wall biogenesis; peptidoglycan biosynthesis. Functionally, cell wall formation. Catalyzes the addition of glutamate to the nucleotide precursor UDP-N-acetylmuramoyl-L-alanine (UMA). In Burkholderia ambifaria (strain ATCC BAA-244 / DSM 16087 / CCUG 44356 / LMG 19182 / AMMD) (Burkholderia cepacia (strain AMMD)), this protein is UDP-N-acetylmuramoylalanine--D-glutamate ligase.